A 39-amino-acid chain; its full sequence is RapF inhibitor (39 aa).

The propeptide occupies 1-34 (MKLKSKLLLSCLALSTVFVATTIANAPTHQIEVA).

Belongs to the Phr family. Interacts with RapF and inhibits its interaction with ComA. Post-translationally, contains a predicted signal peptide cleavage site in the N-terminal region, however the propeptide is probably subject to only one processing event, at the N-terminal end of the mature peptide.

The protein localises to the secreted. Its subcellular location is the cytoplasm. Its function is as follows. Signaling molecule involved in the regulation of genetic competence development. Secreted during production, but the mature peptide acts intracellularly, indicating that it needs to be imported into the cell to function. Stimulates expression of the genes controlled by ComA, a transcriptional factor that regulates the development of genetic competence. Acts by inhibiting RapF, which regulates the activity of ComA. This Bacillus subtilis (strain 168) protein is RapF inhibitor (phrF).